We begin with the raw amino-acid sequence, 180 residues long: Transcription factor HES-7.1-B (180 aa).

Positions H13 to R70 constitute a bHLH domain. Residues Y84–Q116 enclose the Orange domain. The WRPW motif signature appears at W176–W179.

In terms of assembly, transcription repression requires formation of a complex with a corepressor protein of the Groucho/TLE family. As to expression, expressed in the presumptive midbrain-hindbrain boundary (MHB) as early as the early gastrula stage (stage 10.5). Expression in the MHB continues through to tailbud stage. Also transiently expressed in the eye anlage at late neurula stage.

The protein resides in the nucleus. Transcriptional repressor. Represses transcription from both N box- and E box-containing promoters. Demarcates the prospective midbrain-hindbrain boundary (MHB) region in the neuroectoderm in early gastrulae embryos by repressing transcription of a number of target genes. The chain is Transcription factor HES-7.1-B (hes7.1-b) from Xenopus laevis (African clawed frog).